The primary structure comprises 217 residues: Protein-L-isoaspartate O-methyltransferase 2 (217 aa).

Residue S62 is part of the active site.

This sequence belongs to the methyltransferase superfamily. L-isoaspartyl/D-aspartyl protein methyltransferase family.

It localises to the cytoplasm. It catalyses the reaction [protein]-L-isoaspartate + S-adenosyl-L-methionine = [protein]-L-isoaspartate alpha-methyl ester + S-adenosyl-L-homocysteine. Catalyzes the methyl esterification of L-isoaspartyl residues in peptides and proteins that result from spontaneous decomposition of normal L-aspartyl and L-asparaginyl residues. It plays a role in the repair and/or degradation of damaged proteins. In Geotalea uraniireducens (strain Rf4) (Geobacter uraniireducens), this protein is Protein-L-isoaspartate O-methyltransferase 2.